A 355-amino-acid polypeptide reads, in one-letter code: 6-aminohexanoate-oligomer endohydrolase (355 aa).

The active-site Nucleophile is the Thr267.

Belongs to the peptidase S58 family. In terms of assembly, heterotetramer composed of 4 alpha/beta heterodimers. Expressed as an inactive precursor that is cleaved autocatalytically at Asn266/Thr267 to generate an active enzyme composed of an alpha subunit and a beta subunit.

It catalyses the reaction [N-(6-aminohexanoyl)]n + H2O = [N-(6-aminohexanoyl)]n-x + [N-(6-aminohexanoyl)]x.. Its pathway is xenobiotic degradation; nylon-6 oligomer degradation. In terms of biological role, involved in the degradation of nylon-6 oligomers. Degrades cyclic and linear oligomers of 6-aminohexanoate (Ahx) with a degree of polymerization greater than three by an endo-type mode. Cannot use Ahx cyclic dimer or the Ahx linear dimer. This Agromyces sp. (strain KY5R) protein is 6-aminohexanoate-oligomer endohydrolase.